A 177-amino-acid chain; its full sequence is Nucleoside triphosphate/diphosphate phosphatase (177 aa).

Arg-23 functions as the Proton donor in the catalytic mechanism. The Mg(2+) site is built by Asn-87, Asp-103, Asp-105, Asp-107, Asp-120, and Glu-123.

It belongs to the Ntdp family. Requires Mg(2+) as cofactor.

It carries out the reaction a ribonucleoside 5'-triphosphate + H2O = a ribonucleoside 5'-diphosphate + phosphate + H(+). The catalysed reaction is a ribonucleoside 5'-diphosphate + H2O = a ribonucleoside 5'-phosphate + phosphate + H(+). Its function is as follows. Has nucleoside phosphatase activity towards nucleoside triphosphates and nucleoside diphosphates. In Streptococcus equi subsp. zooepidemicus (strain MGCS10565), this protein is Nucleoside triphosphate/diphosphate phosphatase.